The primary structure comprises 345 residues: Transmembrane protein 144 homolog (345 aa).

10 consecutive transmembrane segments (helical) span residues 3–23, 32–52, 61–81, 84–104, 120–140, 193–213, 233–253, 265–285, 293–313, and 324–344; these read IAVG…MFVP, GIFV…VVYS, PLAM…VPIM, IGIG…GWAA, PFLN…FSQI, LAII…VPVI, VFSH…GYVI, LVGP…SWFV, AVSF…WSVF, and LRLL…VGVS.

The protein belongs to the TMEM144 family.

It is found in the membrane. The chain is Transmembrane protein 144 homolog from Caenorhabditis elegans.